Here is a 342-residue protein sequence, read N- to C-terminus: MSSSELLTSSYDFTLPEELIATQPANPRDSAKLLVYDRASDEISHVHFYDFEKFIPKNCALIFNDTKVIKARLFGQKESGGKIELLINRALDAHNIHVFTRGKVKIGTKISFGLELFAKIIELLEDGSRVVNFYKNDSILRFEEILPIIDKIGHIPLPPYIQREDNKDDEIEYQSVFAKEEGAVAAPTASLHFTKEQHERVCTKFTHAYITLHVGSGTFKPVECEKILEHTMHSEYYDISDRAKELLDSKVSILSVGTTSTRTIEFYARNKEHQRGEANLFLHPKNKPLRVDHILTNFHLPKSTLLMLVASFVGVDKAQELYKIAIEKEYRFYSYGDAMLIL.

Belongs to the QueA family. In terms of assembly, monomer.

It localises to the cytoplasm. The catalysed reaction is 7-aminomethyl-7-carbaguanosine(34) in tRNA + S-adenosyl-L-methionine = epoxyqueuosine(34) in tRNA + adenine + L-methionine + 2 H(+). The protein operates within tRNA modification; tRNA-queuosine biosynthesis. Transfers and isomerizes the ribose moiety from AdoMet to the 7-aminomethyl group of 7-deazaguanine (preQ1-tRNA) to give epoxyqueuosine (oQ-tRNA). The sequence is that of S-adenosylmethionine:tRNA ribosyltransferase-isomerase from Sulfurimonas denitrificans (strain ATCC 33889 / DSM 1251) (Thiomicrospira denitrificans (strain ATCC 33889 / DSM 1251)).